Reading from the N-terminus, the 445-residue chain is Gamma-glutamyl phosphate reductase (445 aa).

This sequence belongs to the gamma-glutamyl phosphate reductase family.

Its subcellular location is the cytoplasm. The catalysed reaction is L-glutamate 5-semialdehyde + phosphate + NADP(+) = L-glutamyl 5-phosphate + NADPH + H(+). It functions in the pathway amino-acid biosynthesis; L-proline biosynthesis; L-glutamate 5-semialdehyde from L-glutamate: step 2/2. Functionally, catalyzes the NADPH-dependent reduction of L-glutamate 5-phosphate into L-glutamate 5-semialdehyde and phosphate. The product spontaneously undergoes cyclization to form 1-pyrroline-5-carboxylate. This is Gamma-glutamyl phosphate reductase from Saccharopolyspora erythraea (strain ATCC 11635 / DSM 40517 / JCM 4748 / NBRC 13426 / NCIMB 8594 / NRRL 2338).